Consider the following 211-residue polypeptide: Holliday junction resolvase RecU (211 aa).

4 residues coordinate Mg(2+): T95, D97, E110, and Q129.

Belongs to the RecU family. The cofactor is Mg(2+).

The protein resides in the cytoplasm. It catalyses the reaction Endonucleolytic cleavage at a junction such as a reciprocal single-stranded crossover between two homologous DNA duplexes (Holliday junction).. Its function is as follows. Endonuclease that resolves Holliday junction intermediates in genetic recombination. Cleaves mobile four-strand junctions by introducing symmetrical nicks in paired strands. Promotes annealing of linear ssDNA with homologous dsDNA. Required for DNA repair, homologous recombination and chromosome segregation. This is Holliday junction resolvase RecU from Lactobacillus acidophilus (strain ATCC 700396 / NCK56 / N2 / NCFM).